Consider the following 139-residue polypeptide: Hydrogenase maturation factor HypA (139 aa).

Position 2 (His2) interacts with Ni(2+). Cys73, Cys76, Cys110, and Cys113 together coordinate Zn(2+).

Belongs to the HypA/HybF family.

Its function is as follows. Involved in the maturation of [NiFe] hydrogenases. Required for nickel insertion into the metal center of the hydrogenase. The polypeptide is Hydrogenase maturation factor HypA (Pyrococcus horikoshii (strain ATCC 700860 / DSM 12428 / JCM 9974 / NBRC 100139 / OT-3)).